Reading from the N-terminus, the 93-residue chain is Precursor of CEP13 (93 aa).

An N-terminal signal peptide occupies residues methionine 1–alanine 27. The propeptide occupies arginine 28–glutamate 78. The tract at residues leucine 45–histidine 93 is disordered. Proline 87 and proline 89 each carry hydroxyproline.

This sequence belongs to the C-terminally encoded plant signaling peptide (CEP) family. As to quaternary structure, interacts with CEP receptors (e.g. CEPR1 and CEPR2). The mature small signaling peptide is generated by proteolytic processing of the longer precursor.

The protein resides in the secreted. The protein localises to the extracellular space. Its subcellular location is the apoplast. Extracellular signaling peptide that may regulate primary root growth rate and systemic nitrogen (N)-demand signaling. The chain is Precursor of CEP13 from Arabidopsis thaliana (Mouse-ear cress).